The following is a 196-amino-acid chain: ATP-dependent Clp protease proteolytic subunit (196 aa).

Serine 101 serves as the catalytic Nucleophile. Residue histidine 126 is part of the active site.

The protein belongs to the peptidase S14 family. In terms of assembly, component of the chloroplastic Clp protease core complex.

It localises to the plastid. It catalyses the reaction Hydrolysis of proteins to small peptides in the presence of ATP and magnesium. alpha-casein is the usual test substrate. In the absence of ATP, only oligopeptides shorter than five residues are hydrolyzed (such as succinyl-Leu-Tyr-|-NHMec, and Leu-Tyr-Leu-|-Tyr-Trp, in which cleavage of the -Tyr-|-Leu- and -Tyr-|-Trp bonds also occurs).. Its function is as follows. Cleaves peptides in various proteins in a process that requires ATP hydrolysis. Has a chymotrypsin-like activity. Plays a major role in the degradation of misfolded proteins. The sequence is that of ATP-dependent Clp protease proteolytic subunit (clpP) from Epifagus virginiana (Beechdrops).